We begin with the raw amino-acid sequence, 154 residues long: Ribosome maturation factor RimP (154 aa).

It belongs to the RimP family.

It localises to the cytoplasm. Functionally, required for maturation of 30S ribosomal subunits. This Desulforudis audaxviator (strain MP104C) protein is Ribosome maturation factor RimP.